Reading from the N-terminus, the 108-residue chain is Evasin P1156 (108 aa).

A signal peptide spans 1-28 (MEVKTYAFLQIAVFIFLGMQIFASLTDA). 3 disulfide bridges follow: C41-C63, C45-C65, and C56-C76. Residue N44 is glycosylated (N-linked (GlcNAc...) asparagine). The disordered stretch occupies residues 89 to 108 (NPSDSEIEAAKPKRSDTLSH). The span at 96 to 108 (EAAKPKRSDTLSH) shows a compositional bias: basic and acidic residues.

Its subcellular location is the secreted. Salivary chemokine-binding protein which has chemokine-neutralizing activity and binds to host chemokines CXCL1, CXCL2, CXCL3, CXCL5, CXCL6 and CXCL8. The protein is Evasin P1156 of Ixodes ricinus (Common tick).